Here is a 2429-residue protein sequence, read N- to C-terminus: Reducing polyketide synthase ppsB (2429 aa).

The 439-residue stretch at 4–442 (DERVAIIGTG…GTNAHAILES (439 aa)) folds into the Ketosynthase family 3 (KS3) domain. Residues Cys-177, His-317, and His-362 each act as for beta-ketoacyl synthase activity in the active site. A malonyl-CoA:ACP transacylase (MAT) domain region spans residues 558 to 873 (VFTGQGAQWP…PYIGLAHRGE (316 aa)). The active-site For acyl/malonyl transferase activity is Ser-652. Residues 945 to 1075 (HPLLGVLSSE…GRVILALGEA (131 aa)) form an N-terminal hotdog fold region. The interval 945–1227 (HPLLGVLSSE…QLEGIHLTLS (283 aa)) is product template (PT) domain. Residues 945–1233 (HPLLGVLSSE…LTLSKPKNSS (289 aa)) form the PKS/mFAS DH domain. Residues 1090–1233 (SYPMNVDKFY…LTLSKPKNSS (144 aa)) form a C-terminal hotdog fold region. Positions 1409–2158 (LEVGAGTGSA…ISDLYDQLTS (750 aa)) are methyltransferase (CMeT) domain. In terms of domain architecture, Carrier spans 2350–2425 (EIILQLFKEK…SMVDEVVKRR (76 aa)). An O-(pantetheine 4'-phosphoryl)serine modification is found at Ser-2385.

Its pathway is secondary metabolite biosynthesis. In terms of biological role, reducing polyketide synthase; part of the gene cluster that mediates the biosynthesis of 2,4'-dihydroxy-3'-methoxypropiophenone. The first step of the pathway is the conversion of acetate into acetyl-CoA by the acyl-CoA ligase ppsA. Acetyl-CoA is then used as a starter unit by the polyketide synthase ppsB and condensed with 4 malonyl-CoA unit to produce the pentaketide backbone. During polyketide extension, the polykedite chain is probably reduced and dehydrated by the KR and PT domains, respectively. O-methylation seems to be catalyzed by an unknown methyltransferase rather than by the CMeT domain of ppsB. Two hydroxylations and one further decarboxylation step catalyzed by yet unknown enzymes are then required to yield 4'-hydroxy-3'-methoxypropiophenone. PpsC functions as a carrier protein to transport 4'-hydroxy-3'-methoxypropiophenone to a specific cell compartment in which 4'-hydroxy-3'-methoxypropiophenone is hydroxylated to 2,4'-dihydroxy-3'-methoxypropiophenone by a still to be identified enzyme. This is Reducing polyketide synthase ppsB from Aspergillus oryzae (strain ATCC 42149 / RIB 40) (Yellow koji mold).